Consider the following 126-residue polypeptide: Large ribosomal subunit protein eL32 (126 aa).

The protein belongs to the eukaryotic ribosomal protein eL32 family. As to quaternary structure, part of the 50S ribosomal subunit.

This chain is Large ribosomal subunit protein eL32 (rpl32e), found in Thermococcus kodakarensis (strain ATCC BAA-918 / JCM 12380 / KOD1) (Pyrococcus kodakaraensis (strain KOD1)).